Consider the following 287-residue polypeptide: Large ribosomal subunit protein uL2 (287 aa).

The segment at 221–287 (RGSVMNPCDH…SKRSRGGRDS (67 aa)) is disordered. A compositionally biased stretch (basic residues) spans 258–287 (KTRKRNKPSNRFVLRKRRRTSKRSRGGRDS).

The protein belongs to the universal ribosomal protein uL2 family. In terms of assembly, part of the 50S ribosomal subunit. Forms a bridge to the 30S subunit in the 70S ribosome.

In terms of biological role, one of the primary rRNA binding proteins. Required for association of the 30S and 50S subunits to form the 70S ribosome, for tRNA binding and peptide bond formation. It has been suggested to have peptidyltransferase activity; this is somewhat controversial. Makes several contacts with the 16S rRNA in the 70S ribosome. The protein is Large ribosomal subunit protein uL2 of Prochlorococcus marinus (strain MIT 9313).